The primary structure comprises 486 residues: N-succinylglutamate 5-semialdehyde dehydrogenase (486 aa).

220 to 225 lines the NAD(+) pocket; that stretch reads GSSRTG. Catalysis depends on residues E243 and C277.

It belongs to the aldehyde dehydrogenase family. AstD subfamily.

It catalyses the reaction N-succinyl-L-glutamate 5-semialdehyde + NAD(+) + H2O = N-succinyl-L-glutamate + NADH + 2 H(+). The protein operates within amino-acid degradation; L-arginine degradation via AST pathway; L-glutamate and succinate from L-arginine: step 4/5. In terms of biological role, catalyzes the NAD-dependent reduction of succinylglutamate semialdehyde into succinylglutamate. The sequence is that of N-succinylglutamate 5-semialdehyde dehydrogenase from Shewanella baltica (strain OS155 / ATCC BAA-1091).